Here is a 360-residue protein sequence, read N- to C-terminus: Protein-glutamate methylesterase/protein-glutamine glutaminase 3 (360 aa).

Positions 14–131 (RVLVIDDSAT…AEGVQAYAEE (118 aa)) constitute a Response regulatory domain. Position 65 is a 4-aspartylphosphate (D65). Residues 169–360 (AGKDGRVVAV…AGKLMELDGA (192 aa)) form the CheB-type methylesterase domain. Residues S181, H207, and D303 contribute to the active site.

The protein belongs to the CheB family. In terms of processing, phosphorylated by CheA. Phosphorylation of the N-terminal regulatory domain activates the methylesterase activity.

It localises to the cytoplasm. The enzyme catalyses [protein]-L-glutamate 5-O-methyl ester + H2O = L-glutamyl-[protein] + methanol + H(+). It catalyses the reaction L-glutaminyl-[protein] + H2O = L-glutamyl-[protein] + NH4(+). In terms of biological role, involved in chemotaxis. Part of a chemotaxis signal transduction system that modulates chemotaxis in response to various stimuli. Catalyzes the demethylation of specific methylglutamate residues introduced into the chemoreceptors (methyl-accepting chemotaxis proteins or MCP) by CheR. Also mediates the irreversible deamidation of specific glutamine residues to glutamic acid. This is Protein-glutamate methylesterase/protein-glutamine glutaminase 3 from Burkholderia thailandensis (strain ATCC 700388 / DSM 13276 / CCUG 48851 / CIP 106301 / E264).